The chain runs to 542 residues: Glutamyl-tRNA(Gln) amidotransferase subunit B, mitochondrial (542 aa).

Belongs to the GatB/GatE family. GatB subfamily. In terms of assembly, subunit of the heterotrimeric GatFAB amidotransferase (AdT) complex, composed of A, B and F subunits.

It localises to the mitochondrion. It catalyses the reaction L-glutamyl-tRNA(Gln) + L-glutamine + ATP + H2O = L-glutaminyl-tRNA(Gln) + L-glutamate + ADP + phosphate + H(+). Allows the formation of correctly charged Gln-tRNA(Gln) through the transamidation of misacylated Glu-tRNA(Gln) in the mitochondria. The reaction takes place in the presence of glutamine and ATP through an activated gamma-phospho-Glu-tRNA(Gln). In Candida glabrata (strain ATCC 2001 / BCRC 20586 / JCM 3761 / NBRC 0622 / NRRL Y-65 / CBS 138) (Yeast), this protein is Glutamyl-tRNA(Gln) amidotransferase subunit B, mitochondrial.